Consider the following 245-residue polypeptide: Ribosome maturation factor RimP (245 aa).

Belongs to the RimP family.

Its subcellular location is the cytoplasm. Required for maturation of 30S ribosomal subunits. This is Ribosome maturation factor RimP from Verminephrobacter eiseniae (strain EF01-2).